Reading from the N-terminus, the 178-residue chain is MSKSVAKITFYDDKNFQGHHYECDSDCPDFHTYLSCCNSIRVTGGAWVVYERPNFSGNMYILTQGDYPDYHHWRGLNDRLSSCKVIHLSSGGQYKLQIFERGDFSGQMYETTEDCPSVMEQFHIREIQSCKVLDGVWVFYEQPNYYGRQYFLDKKEYRKPVDWGSPCSAVQSFRRIME.

S2 carries the N-acetylserine modification. Residues 2–5 are N-terminal arm; the sequence is SKSV. 2 consecutive Beta/gamma crystallin 'Greek key' domains span residues 6–44 and 45–87; these read AKIT…RVTG and GAWV…KVIH. A connecting peptide region spans residues 88–93; sequence LSSGGQ. 2 Beta/gamma crystallin 'Greek key' domains span residues 94 to 134 and 135 to 177; these read YKLQ…KVLD and GVWV…RRIM.

It belongs to the beta/gamma-crystallin family. As to quaternary structure, monomer.

In terms of biological role, crystallins are the dominant structural components of the vertebrate eye lens. The polypeptide is Gamma-crystallin S (CRYGS) (Macropus fuliginosus (Western gray kangaroo)).